Reading from the N-terminus, the 73-residue chain is Disintegrin mojastin-2 (73 aa).

In terms of domain architecture, Disintegrin spans Glu1–Gly73. 6 disulfide bridges follow: Cys6/Cys21, Cys8/Cys16, Cys15/Cys38, Cys29/Cys35, Cys34/Cys59, and Cys47/Cys66. The short motif at Arg51–Asp53 is the Cell attachment site element.

Belongs to the venom metalloproteinase (M12B) family. P-II subfamily. P-IIa sub-subfamily. Monomer (disintegrin). In terms of tissue distribution, expressed by the venom gland.

It is found in the secreted. In terms of biological role, inhibits the three processes involved in platelet function (adhesion, activation and aggregation). It inhibits platelet adhesion to fibronectin with an IC(50) of 58.6 nM. It inhibits ATP release from platelet induced by ADP with an IC(50) of 19.5 nM on platelet-rich plasma, probably by binding to ADP receptors (P2RY1 and P2RY12). Finally, it inhibits ADP-induced platelet aggregation with IC(50) of 44.7 nM on platelet-rich plasma and 19.3 nM on whole blood, probably by binding to alpha-IIb/beta-3 (ITGA2B/ITGB3). Inhibits ADP-induced platelet aggregation (IC(50) = 13.8 nM) probably by binding to alpha-IIb/beta-3 (ITGA2B/ITGB3) located on the platelet surface. In Crotalus scutulatus scutulatus (Mojave rattlesnake), this protein is Disintegrin mojastin-2.